We begin with the raw amino-acid sequence, 426 residues long: Serine--tRNA ligase (426 aa).

233–235 (TAE) is a binding site for L-serine. 264–266 (RAE) is a binding site for ATP. Position 287 (E287) interacts with L-serine. ATP is bound at residue 351 to 354 (EISS). S387 provides a ligand contact to L-serine.

Belongs to the class-II aminoacyl-tRNA synthetase family. Type-1 seryl-tRNA synthetase subfamily. In terms of assembly, homodimer. The tRNA molecule binds across the dimer.

Its subcellular location is the cytoplasm. The enzyme catalyses tRNA(Ser) + L-serine + ATP = L-seryl-tRNA(Ser) + AMP + diphosphate + H(+). It carries out the reaction tRNA(Sec) + L-serine + ATP = L-seryl-tRNA(Sec) + AMP + diphosphate + H(+). It functions in the pathway aminoacyl-tRNA biosynthesis; selenocysteinyl-tRNA(Sec) biosynthesis; L-seryl-tRNA(Sec) from L-serine and tRNA(Sec): step 1/1. In terms of biological role, catalyzes the attachment of serine to tRNA(Ser). Is also able to aminoacylate tRNA(Sec) with serine, to form the misacylated tRNA L-seryl-tRNA(Sec), which will be further converted into selenocysteinyl-tRNA(Sec). In Clostridium kluyveri (strain NBRC 12016), this protein is Serine--tRNA ligase.